We begin with the raw amino-acid sequence, 127 residues long: Holo-[acyl-carrier-protein] synthase (127 aa).

Residues aspartate 7 and glutamate 56 each contribute to the Mg(2+) site.

The protein belongs to the P-Pant transferase superfamily. AcpS family. The cofactor is Mg(2+).

Its subcellular location is the cytoplasm. The catalysed reaction is apo-[ACP] + CoA = holo-[ACP] + adenosine 3',5'-bisphosphate + H(+). Functionally, transfers the 4'-phosphopantetheine moiety from coenzyme A to a Ser of acyl-carrier-protein. This chain is Holo-[acyl-carrier-protein] synthase, found in Leptospira biflexa serovar Patoc (strain Patoc 1 / Ames).